Consider the following 516-residue polypeptide: Na(+)/H(+) antiporter NhaB (516 aa).

The next 12 helical transmembrane spans lie at 23-43, 61-80, 97-117, 120-140, 144-164, 202-222, 238-258, 303-323, 348-368, 391-411, 447-467, and 475-495; these read LALIIFLIVNPLVFAVAPFVA, CYPLLPGGLLAIEALLIGMT, LLLMFMVAGIYFMKQLLLFVF, LLLGIRSKMLLSLAFCLAAAF, FLDALTVVAVVISVAVGFYGI, LMMHAGVGTALGGVMTMVGEP, FFLRMAPVTLPVMVCGLLTCL, ALIGVWLIVALAFHLAEVGLI, TEALPFTALLTVFFSIVAVII, LFYLFNGLLSSISDNVFVGTV, ATPNGQAAFLFLLTSALAPLI, and VWMALPYTIVLTLVGLLCVEF.

The protein belongs to the NhaB Na(+)/H(+) (TC 2.A.34) antiporter family.

Its subcellular location is the cell inner membrane. It carries out the reaction 2 Na(+)(in) + 3 H(+)(out) = 2 Na(+)(out) + 3 H(+)(in). Its function is as follows. Na(+)/H(+) antiporter that extrudes sodium in exchange for external protons. The polypeptide is Na(+)/H(+) antiporter NhaB (Klebsiella pneumoniae subsp. pneumoniae (strain ATCC 700721 / MGH 78578)).